We begin with the raw amino-acid sequence, 347 residues long: Protein RecA (347 aa).

Position 67–74 (67–74) interacts with ATP; sequence GPESSGKT.

It belongs to the RecA family.

The protein resides in the cytoplasm. Can catalyze the hydrolysis of ATP in the presence of single-stranded DNA, the ATP-dependent uptake of single-stranded DNA by duplex DNA, and the ATP-dependent hybridization of homologous single-stranded DNAs. It interacts with LexA causing its activation and leading to its autocatalytic cleavage. This Helicobacter pylori (strain Shi470) protein is Protein RecA.